A 237-amino-acid polypeptide reads, in one-letter code: 1-(5-phosphoribosyl)-5-[(5-phosphoribosylamino)methylideneamino] imidazole-4-carboxamide isomerase (237 aa).

D8 (proton acceptor) is an active-site residue. The Proton donor role is filled by D128.

This sequence belongs to the HisA/HisF family.

The protein resides in the cytoplasm. It catalyses the reaction 1-(5-phospho-beta-D-ribosyl)-5-[(5-phospho-beta-D-ribosylamino)methylideneamino]imidazole-4-carboxamide = 5-[(5-phospho-1-deoxy-D-ribulos-1-ylimino)methylamino]-1-(5-phospho-beta-D-ribosyl)imidazole-4-carboxamide. The protein operates within amino-acid biosynthesis; L-histidine biosynthesis; L-histidine from 5-phospho-alpha-D-ribose 1-diphosphate: step 4/9. This is 1-(5-phosphoribosyl)-5-[(5-phosphoribosylamino)methylideneamino] imidazole-4-carboxamide isomerase from Gemmatimonas aurantiaca (strain DSM 14586 / JCM 11422 / NBRC 100505 / T-27).